A 294-amino-acid polypeptide reads, in one-letter code: 4-hydroxy-tetrahydrodipicolinate synthase (294 aa).

Thr-44 contacts pyruvate. Tyr-132 (proton donor/acceptor) is an active-site residue. Catalysis depends on Lys-160, which acts as the Schiff-base intermediate with substrate. Val-202 contributes to the pyruvate binding site.

This sequence belongs to the DapA family. In terms of assembly, homotetramer; dimer of dimers.

It localises to the cytoplasm. It carries out the reaction L-aspartate 4-semialdehyde + pyruvate = (2S,4S)-4-hydroxy-2,3,4,5-tetrahydrodipicolinate + H2O + H(+). The protein operates within amino-acid biosynthesis; L-lysine biosynthesis via DAP pathway; (S)-tetrahydrodipicolinate from L-aspartate: step 3/4. Its function is as follows. Catalyzes the condensation of (S)-aspartate-beta-semialdehyde [(S)-ASA] and pyruvate to 4-hydroxy-tetrahydrodipicolinate (HTPA). The protein is 4-hydroxy-tetrahydrodipicolinate synthase of Leptospira biflexa serovar Patoc (strain Patoc 1 / Ames).